The chain runs to 155 residues: 3-hydroxyacyl-[acyl-carrier-protein] dehydratase FabZ (155 aa).

The active site involves His58.

Belongs to the thioester dehydratase family. FabZ subfamily.

It is found in the cytoplasm. The enzyme catalyses a (3R)-hydroxyacyl-[ACP] = a (2E)-enoyl-[ACP] + H2O. Its function is as follows. Involved in unsaturated fatty acids biosynthesis. Catalyzes the dehydration of short chain beta-hydroxyacyl-ACPs and long chain saturated and unsaturated beta-hydroxyacyl-ACPs. In Rhizobium etli (strain ATCC 51251 / DSM 11541 / JCM 21823 / NBRC 15573 / CFN 42), this protein is 3-hydroxyacyl-[acyl-carrier-protein] dehydratase FabZ.